A 235-amino-acid chain; its full sequence is Cobalt transport protein CbiM (235 aa).

The next 6 helical transmembrane spans lie at 6 to 26 (GVLP…FVVH), 43 to 63 (LLLA…LPSV), 85 to 105 (MAFM…HGGI), 108 to 128 (LGAN…GAYV), 133 to 153 (LGGP…LSTY), and 181 to 201 (IFAI…ILLF).

The protein belongs to the CbiM family. As to quaternary structure, forms an energy-coupling factor (ECF) transporter complex composed of an ATP-binding protein (A component, CbiO), a transmembrane protein (T component, CbiQ) and 2 possible substrate-capture proteins (S components, CbiM and CbiN) of unknown stoichimetry.

It is found in the cell membrane. Its pathway is cofactor biosynthesis; adenosylcobalamin biosynthesis. Part of the energy-coupling factor (ECF) transporter complex CbiMNOQ involved in cobalt import. The chain is Cobalt transport protein CbiM from Propionibacterium freudenreichii subsp. shermanii (strain ATCC 9614 / DSM 4902 / CIP 103027 / NCIMB 8099 / CIRM-BIA1).